Here is a 578-residue protein sequence, read N- to C-terminus: Asparagine synthetase [glutamine-hydrolyzing] 3 (578 aa).

Catalysis depends on cysteine 2, which acts as the For GATase activity. Positions 2 to 185 constitute a Glutamine amidotransferase type-2 domain; it reads CGILAVLGCV…PGHIYSSKQG (184 aa). Residues 50–54, 75–77, and aspartate 98 each bind L-glutamine; these read RLAIV and NGE. The Asparagine synthetase domain maps to 210 to 450; that stretch reads VRNTFEKAVI…LPKHILYRQK (241 aa). ATP-binding positions include leucine 231, isoleucine 267, and 341–342; that span reads SG. Over residues 555–572 the composition is skewed to basic and acidic residues; it reads GEDKTEDSRPEKLQKLAE. Positions 555 to 578 are disordered; that stretch reads GEDKTEDSRPEKLQKLAEKTPAIV.

The enzyme catalyses L-aspartate + L-glutamine + ATP + H2O = L-asparagine + L-glutamate + AMP + diphosphate + H(+). It functions in the pathway amino-acid biosynthesis; L-asparagine biosynthesis. In terms of biological role, essential for nitrogen assimilation, distribution and remobilization within the plant via the phloem. The sequence is that of Asparagine synthetase [glutamine-hydrolyzing] 3 (ASN3) from Arabidopsis thaliana (Mouse-ear cress).